The primary structure comprises 456 residues: Probable polygalacturonase At3g15720 (456 aa).

Residues 1 to 23 (MKKKTWFLNFSLFFLQIFTSSNA) form the signal peptide. 6 PbH1 repeats span residues 169 to 195 (CNYV…DVGA), 196 to 217 (SSNV…AINS), 219 to 239 (TSNI…SIGS), 249 to 270 (VENV…RIKT), 278 to 299 (ARMI…IIDQ), and 314 to 341 (SSAV…DFRC). D210 functions as the Proton donor in the catalytic mechanism. H233 is an active-site residue.

It belongs to the glycosyl hydrolase 28 family.

Its subcellular location is the secreted. The protein localises to the cell wall. It catalyses the reaction (1,4-alpha-D-galacturonosyl)n+m + H2O = (1,4-alpha-D-galacturonosyl)n + (1,4-alpha-D-galacturonosyl)m.. This Arabidopsis thaliana (Mouse-ear cress) protein is Probable polygalacturonase At3g15720.